A 740-amino-acid chain; its full sequence is Cell death abnormality protein 12 (740 aa).

Positions Ser-348 to Leu-494 constitute an ELMO domain. Residues Ile-555–Thr-690 are required for punctate localization, cell corpse engulfment and distal cell tip migration. The SH3-binding motif lies at Pro-724 to Pro-727.

Interacts with psr-1. Forms a ternary complex with ced-2 and ced-5.

The protein resides in the cytoplasm. Its function is as follows. Involved in apoptosis and necrosis. Required for the cell corpse engulfment process. Has roles in the formation of actin halos and distal tip cell migration. Plays no role in amphid axon outgrowth. This chain is Cell death abnormality protein 12, found in Caenorhabditis briggsae.